A 1158-amino-acid chain; its full sequence is ATP-dependent helicase/deoxyribonuclease subunit B (1158 aa).

8 to 15 (GRAGTGKS) serves as a coordination point for ATP. Positions 791, 1112, 1115, and 1121 each coordinate [4Fe-4S] cluster.

The protein belongs to the helicase family. AddB/RexB type 1 subfamily. Heterodimer of AddA and AddB. It depends on Mg(2+) as a cofactor. Requires [4Fe-4S] cluster as cofactor.

Its function is as follows. The heterodimer acts as both an ATP-dependent DNA helicase and an ATP-dependent, dual-direction single-stranded exonuclease. Recognizes the chi site generating a DNA molecule suitable for the initiation of homologous recombination. The AddB subunit has 5' -&gt; 3' nuclease activity but not helicase activity. The protein is ATP-dependent helicase/deoxyribonuclease subunit B of Clostridium perfringens (strain ATCC 13124 / DSM 756 / JCM 1290 / NCIMB 6125 / NCTC 8237 / Type A).